A 337-amino-acid chain; its full sequence is Glyceraldehyde-3-phosphate dehydrogenase (337 aa).

NAD(+)-binding positions include 13-14 (RI), aspartate 35, and lysine 80. Residues 151–153 (SCT), threonine 182, 211–212 (TG), and arginine 234 each bind D-glyceraldehyde 3-phosphate. Cysteine 152 serves as the catalytic Nucleophile. Asparagine 316 contributes to the NAD(+) binding site.

It belongs to the glyceraldehyde-3-phosphate dehydrogenase family. Homotetramer.

The protein localises to the cytoplasm. The catalysed reaction is D-glyceraldehyde 3-phosphate + phosphate + NAD(+) = (2R)-3-phospho-glyceroyl phosphate + NADH + H(+). Its pathway is carbohydrate degradation; glycolysis; pyruvate from D-glyceraldehyde 3-phosphate: step 1/5. This Mycosarcoma maydis (Corn smut fungus) protein is Glyceraldehyde-3-phosphate dehydrogenase (GAPD).